A 360-amino-acid chain; its full sequence is Protein phosphatase 1 regulatory subunit 7 (360 aa).

Positions 1–64 (MAAERGAGQQ…GEEDPEEEHE (64 aa)) are disordered. Residue A2 is modified to N-acetylalanine. Residues S12, S24, S27, S44, and S47 each carry the phosphoserine modification. Over residues 17–34 (EVDRRVESEESGDEEGKK) the composition is skewed to basic and acidic residues. The span at 53 to 63 (ERGEEDPEEEH) shows a compositional bias: acidic residues. LRR repeat units follow at residues 77 to 98 (DAED…EVLK), 99 to 120 (KVKT…EELQ), 121 to 142 (SLRE…EALT), 143 to 164 (ELEI…DKLT), 165 to 186 (RLKK…SNLH), 187 to 208 (QLQM…DTLT), 209 to 230 (NLES…DALT), 231 to 252 (NLTV…QNLV), 253 to 274 (NLRE…ENNN), 275 to 296 (KLTM…SHLT), and 297 to 318 (ELQE…DELK). A Phosphoserine modification is found at S322. The LRRCT domain maps to 331 to 360 (NPLQKDPQYRRKVMLALPSVRQIDATFVRF).

It belongs to the SDS22 family. As to quaternary structure, interacts with PPP1CA, PPP1CB and PPP1CC/PPP1G isoform 1. Widely expressed.

The protein localises to the nucleus. Functionally, regulatory subunit of protein phosphatase 1. The sequence is that of Protein phosphatase 1 regulatory subunit 7 (PPP1R7) from Homo sapiens (Human).